The primary structure comprises 341 residues: Phosphate acyltransferase (341 aa).

Belongs to the PlsX family. Homodimer. Probably interacts with PlsY.

It localises to the cytoplasm. The catalysed reaction is a fatty acyl-[ACP] + phosphate = an acyl phosphate + holo-[ACP]. It participates in lipid metabolism; phospholipid metabolism. Catalyzes the reversible formation of acyl-phosphate (acyl-PO(4)) from acyl-[acyl-carrier-protein] (acyl-ACP). This enzyme utilizes acyl-ACP as fatty acyl donor, but not acyl-CoA. The protein is Phosphate acyltransferase of Vibrio parahaemolyticus serotype O3:K6 (strain RIMD 2210633).